A 767-amino-acid polypeptide reads, in one-letter code: 5-methyltetrahydropteroyltriglutamate--homocysteine methyltransferase (767 aa).

5-methyltetrahydropteroyltri-L-glutamate-binding residues include Lys19 and Asn126. Residues 446 to 448 (IGS) and Glu499 contribute to the L-homocysteine site. L-methionine is bound by residues 446–448 (IGS) and Glu499. 5-methyltetrahydropteroyltri-L-glutamate is bound by residues Asp504, Tyr527, 530–531 (RY), and Trp576. Asp614 contacts L-homocysteine. Position 614 (Asp614) interacts with L-methionine. Zn(2+)-binding residues include His657, Cys659, and Glu679. Catalysis depends on His707, which acts as the Proton donor. Cys739 provides a ligand contact to Zn(2+).

It belongs to the vitamin-B12 independent methionine synthase family. It depends on Zn(2+) as a cofactor.

The enzyme catalyses 5-methyltetrahydropteroyltri-L-glutamate + L-homocysteine = tetrahydropteroyltri-L-glutamate + L-methionine. Its pathway is amino-acid biosynthesis; L-methionine biosynthesis via de novo pathway; L-methionine from L-homocysteine (MetE route): step 1/1. Its activity is regulated as follows. Inhibited weakly by methotrexate. In terms of biological role, catalyzes the transfer of a methyl group from 5-methyltetrahydrofolate to homocysteine resulting in methionine formation. This chain is 5-methyltetrahydropteroyltriglutamate--homocysteine methyltransferase, found in Candida albicans (strain SC5314 / ATCC MYA-2876) (Yeast).